The following is a 432-amino-acid chain: Transcriptional adapter 3 (432 aa).

Residues 40-69 (IEELDTLQLELETLLSSASRRLRVLEAETQ) adopt a coiled-coil conformation. 2 disordered regions span residues 88–127 (KEHELGTPIKHSKPKKQKLDGKGSHASGPGPGRPKSRNMQ) and 275–313 (SPVEDSPIPEISGKESGTDGASTSPRSQNKPFSAPHTKS). Residues 293 to 305 (DGASTSPRSQNKP) are compositionally biased toward polar residues. A coiled-coil region spans residues 367-407 (LLRLAKEEMNRQELRQRVRMADNEVMDAFRKIMAARQKKRT).

The protein belongs to the NGG1 family.

It is found in the nucleus. Its function is as follows. Functions as a component of the PCAF complex. The PCAF complex is capable of efficiently acetylating histones in a nucleosomal context. The polypeptide is Transcriptional adapter 3 (tada3) (Xenopus tropicalis (Western clawed frog)).